Here is a 91-residue protein sequence, read N- to C-terminus: Small ribosomal subunit protein uS19 (91 aa).

This sequence belongs to the universal ribosomal protein uS19 family.

Protein S19 forms a complex with S13 that binds strongly to the 16S ribosomal RNA. The protein is Small ribosomal subunit protein uS19 of Synechococcus sp. (strain CC9902).